A 178-amino-acid polypeptide reads, in one-letter code: MEVWAILEDLRQTRLLLENASDGVSGLWRFWFGGDLARLVFRIKQDYREEFEKLLDDIPGLFEALNLGHQAHFKEKVLSVLDFSTPGRTAAAVAFLTFILDKWIRQTHFSKGYVLDFIAAALWRTWKARRMRTILDYWPVQPLGVAGILRHPPTMPAVLQEEQQEDNPRAGLDPPVEE.

The protein belongs to the adenoviridae E1B 19 kDa protein family.

Its subcellular location is the host cell membrane. It localises to the host nucleus envelope. The protein localises to the host nucleus lamina. Putative adenovirus Bcl-2 homolog that inhibits apoptosis induced by TNF or FAS pathways, as well as p53-mediated apoptosis. Without E1B 19K function, virus production is compromised because of premature death of host cell. Interacts with Bax protein in cell lysates. The protein is E1B protein, small T-antigen of Human adenovirus B serotype 7 (HAdV-7).